The primary structure comprises 320 residues: Arylacetonitrilase (320 aa).

Residues 5-286 (IKASVVQAST…EGVISAELDL (282 aa)) form the CN hydrolase domain. The active-site Proton acceptor is Glu-46. Residue Lys-133 is part of the active site. The active-site Nucleophile is Cys-178.

The protein belongs to the carbon-nitrogen hydrolase superfamily. Nitrilase family.

It carries out the reaction a nitrile + 2 H2O = a carboxylate + NH4(+). Functionally, nitrilase that hydrolyzes preferentially fumaronitrile, while 3-phenylpropionitrile, beta-cyano-L-alanine and 4-cyanopyridine are transformed at much lower rates. The polypeptide is Arylacetonitrilase (nit) (Trametes versicolor (strain FP-101664) (White-rot fungus)).